We begin with the raw amino-acid sequence, 545 residues long: ATP synthase subunit alpha, mitochondrial (545 aa).

Residues 1–35 (MLARTAAIRSLSRTLINSTKAARPAAAALASTRRL) constitute a mitochondrion transit peptide. Phosphoserine occurs at positions 57 and 178. 206–213 (GDRQTGKT) contacts ATP.

It belongs to the ATPase alpha/beta chains family. As to quaternary structure, F-type ATPases have 2 components, CF(1) - the catalytic core - and CF(0) - the membrane proton channel. CF(1) has five subunits: alpha(3), beta(3), gamma(1), delta(1), epsilon(1). CF(0) has three main subunits: a, b and c.

Its subcellular location is the mitochondrion inner membrane. In terms of biological role, mitochondrial membrane ATP synthase (F(1)F(0) ATP synthase or Complex V) produces ATP from ADP in the presence of a proton gradient across the membrane which is generated by electron transport complexes of the respiratory chain. F-type ATPases consist of two structural domains, F(1) - containing the extramembraneous catalytic core, and F(0) - containing the membrane proton channel, linked together by a central stalk and a peripheral stalk. During catalysis, ATP synthesis in the catalytic domain of F(1) is coupled via a rotary mechanism of the central stalk subunits to proton translocation. Subunits alpha and beta form the catalytic core in F(1). Rotation of the central stalk against the surrounding alpha(3)beta(3) subunits leads to hydrolysis of ATP in three separate catalytic sites on the beta subunits. Subunit alpha does not bear the catalytic high-affinity ATP-binding sites. The polypeptide is ATP synthase subunit alpha, mitochondrial (ATP1) (Saccharomyces cerevisiae (strain ATCC 204508 / S288c) (Baker's yeast)).